A 177-amino-acid polypeptide reads, in one-letter code: UPF0102 protein BPP4042 (177 aa).

Residues 13 to 43 form a disordered region; that stretch reads AAQAQRRLHRRPPASPRASPGARDGGSPTQR.

This sequence belongs to the UPF0102 family.

The polypeptide is UPF0102 protein BPP4042 (Bordetella parapertussis (strain 12822 / ATCC BAA-587 / NCTC 13253)).